The chain runs to 233 residues: Homeobox protein Hox-D4a (233 aa).

The Antp-type hexapeptide signature appears at 124–129; that stretch reads VYPWMK. Residues 145 to 204 constitute a DNA-binding region (homeobox); that stretch reads PKRSRTAYTRQQVLELEKEFHFNRYLTRRRRIEIAHTLCLSERQIKIWFQNRRMKWTKDH. The interval 203 to 233 is disordered; sequence DHKLPNTKGRSAPASSHLQSIHKDQTDITSL. The span at 223-233 shows a compositional bias: basic and acidic residues; that stretch reads IHKDQTDITSL.

It belongs to the Antp homeobox family. Deformed subfamily.

It is found in the nucleus. Sequence-specific transcription factor which is part of a developmental regulatory system that provides cells with specific positional identities on the anterior-posterior axis. The sequence is that of Homeobox protein Hox-D4a (hoxd4a) from Takifugu rubripes (Japanese pufferfish).